A 340-amino-acid polypeptide reads, in one-letter code: CMP-N-acetylneuraminate-beta-galactosamide-alpha-2,3-sialyltransferase 1 (340 aa).

Residues Met-1–Thr-13 are Cytoplasmic-facing. A helical; Signal-anchor for type II membrane protein transmembrane segment spans residues Phe-14–Ala-34. The Lumenal segment spans residues Thr-35–Arg-340. Disulfide bonds link Cys-59-Cys-64, Cys-61-Cys-139, and Cys-142-Cys-281. The N-linked (GlcNAc...) asparagine glycan is linked to Asn-79. Gln-105 is a binding site for substrate. Asn-114 is a glycosylation site (N-linked (GlcNAc...) asparagine). Residues Asn-147 and Asn-170 each coordinate substrate. Asn-201 carries an N-linked (GlcNAc...) asparagine glycan. Tyr-230, Tyr-266, Gly-270, Gly-290, His-299, and His-316 together coordinate substrate. N-linked (GlcNAc...) asparagine glycosylation occurs at Asn-323.

It belongs to the glycosyltransferase 29 family. The soluble form derives from the membrane form by proteolytic processing.

It localises to the golgi apparatus. It is found in the golgi stack membrane. Its subcellular location is the trans-Golgi network membrane. The protein resides in the secreted. The catalysed reaction is a beta-D-galactosyl-(1-&gt;3)-N-acetyl-alpha-D-galactosaminyl derivative + CMP-N-acetyl-beta-neuraminate = an N-acetyl-alpha-neuraminyl-(2-&gt;3)-beta-D-galactosyl-(1-&gt;3)-N-acetyl-alpha-D-galactosaminyl derivative + CMP + H(+). The enzyme catalyses a ganglioside GM1 + CMP-N-acetyl-beta-neuraminate = a ganglioside GD1a + CMP + H(+). It carries out the reaction a ganglioside GM1 (d18:1(4E)) + CMP-N-acetyl-beta-neuraminate = a ganglioside GD1a (d18:1(4E)) + CMP + H(+). It catalyses the reaction ganglioside GM1 (d18:1(4E)/18:0) + CMP-N-acetyl-beta-neuraminate = ganglioside GD1a (18:1(4E)/18:0) + CMP + H(+). The catalysed reaction is a ganglioside GA1 + CMP-N-acetyl-beta-neuraminate = a ganglioside GM1b + CMP + H(+). The enzyme catalyses a ganglioside GA1 (d18:1(4E)) + CMP-N-acetyl-beta-neuraminate = a ganglioside GM1b (d18:1(4E)) + CMP + H(+). It carries out the reaction a ganglioside GD1b + CMP-N-acetyl-beta-neuraminate = a ganglioside GT1b + CMP + H(+). It catalyses the reaction a 3-O-[beta-D-galactosyl-(1-&gt;3)-N-acetyl-alpha-D-galactosaminyl]-L-threonyl-[protein] + CMP-N-acetyl-beta-neuraminate = a 3-O-[N-acetyl-alpha-neuraminyl-(2-&gt;3)-beta-D-galactosyl-(1-&gt;3)-N-acetyl-alpha-D-galactosaminyl]-L-threonyl-[protein] + CMP + H(+). The catalysed reaction is a 3-O-[beta-D-galactosyl-(1-&gt;3)-N-acetyl-alpha-D-galactosaminyl]-L-seryl-[protein] + CMP-N-acetyl-beta-neuraminate = 3-O-[N-acetyl-alpha-neuraminyl-(2-&gt;3)-beta-D-galactosyl-(1-&gt;3)-N-acetyl-alpha-D-galactosaminyl]-L-seryl-[protein] + CMP + H(+). It participates in protein modification; protein glycosylation. The protein operates within glycolipid biosynthesis. A beta-galactoside alpha2-&gt;3 sialyltransferase involved in terminal sialylation of glycoproteins and glycolipids. Catalyzes the transfer of sialic acid (N-acetyl-neuraminic acid; Neu5Ac) from the nucleotide sugar donor CMP-Neu5Ac onto acceptor Galbeta-(1-&gt;3)-GalNAc-terminated glycoconjugates through an alpha2-3 linkage. Adds sialic acid to the core 1 O-glycan, Galbeta-(1-&gt;3)-GalNAc-O-Ser/Thr, which is a major structure of mucin-type O-glycans. As part of a homeostatic mechanism that regulates CD8-positive T cell numbers, sialylates core 1 O-glycans of T cell glycoproteins, SPN/CD43 and PTPRC/CD45. Prevents premature apoptosis of thymic CD8-positive T cells prior to peripheral emigration, whereas in the secondary lymphoid organs controls the survival of CD8-positive memory T cells generated following a successful immune response. Transfers sialic acid to asialofetuin, presumably onto Galbeta-(1-&gt;3)-GalNAc-O-Ser. Sialylates GM1a, GA1 and GD1b gangliosides to form GD1a, GM1b and GT1b, respectively. The chain is CMP-N-acetylneuraminate-beta-galactosamide-alpha-2,3-sialyltransferase 1 (ST3GAL1) from Pan troglodytes (Chimpanzee).